The sequence spans 201 residues: Glutathione peroxidase 1 (201 aa).

Serine 32 is modified (phosphoserine). Selenocysteine 47 is an active-site residue. A non-standard amino acid (selenocysteine) is located at residue selenocysteine 47. N6-acetyllysine; alternate is present on residues lysine 86, lysine 112, and lysine 146. N6-succinyllysine; alternate is present on residues lysine 86, lysine 112, and lysine 146. 2 positions are modified to phosphoserine: serine 195 and serine 199.

Belongs to the glutathione peroxidase family. As to quaternary structure, homotetramer. Interacts with MIEN1. Post-translationally, during periods of oxidative stress, Sec-47 may react with a superoxide radical, irreversibly lose hydroselenide and be converted to dehydroalanine.

The protein resides in the cytoplasm. The protein localises to the mitochondrion. It catalyses the reaction 2 glutathione + H2O2 = glutathione disulfide + 2 H2O. It carries out the reaction a hydroperoxy polyunsaturated fatty acid + 2 glutathione = a hydroxy polyunsaturated fatty acid + glutathione disulfide + H2O. The enzyme catalyses tert-butyl hydroperoxide + 2 glutathione = tert-butanol + glutathione disulfide + H2O. The catalysed reaction is cumene hydroperoxide + 2 glutathione = 2-phenylpropan-2-ol + glutathione disulfide + H2O. It catalyses the reaction (13S)-hydroperoxy-(9Z,11E)-octadecadienoate + 2 glutathione = (13S)-hydroxy-(9Z,11E)-octadecadienoate + glutathione disulfide + H2O. It carries out the reaction (9S)-hydroperoxy-(10E,12Z)-octadecadienoate + 2 glutathione = (9S)-hydroxy-(10E,12Z)-octadecadienoate + glutathione disulfide + H2O. The enzyme catalyses (5S)-hydroperoxy-(6E,8Z,11Z,14Z)-eicosatetraenoate + 2 glutathione = (5S)-hydroxy-(6E,8Z,11Z,14Z)-eicosatetraenoate + glutathione disulfide + H2O. The catalysed reaction is (12S)-hydroperoxy-(5Z,8Z,10E,14Z)-eicosatetraenoate + 2 glutathione = (12S)-hydroxy-(5Z,8Z,10E,14Z)-eicosatetraenoate + glutathione disulfide + H2O. It catalyses the reaction (12R)-hydroperoxy-(5Z,8Z,10E,14Z)-eicosatetraenoate + 2 glutathione = (12R)-hydroxy-(5Z,8Z,10E,14Z)-eicosatetraenoate + glutathione disulfide + H2O. It carries out the reaction (15S)-hydroperoxy-(5Z,8Z,11Z,13E)-eicosatetraenoate + 2 glutathione = (15S)-hydroxy-(5Z,8Z,11Z,13E)-eicosatetraenoate + glutathione disulfide + H2O. The enzyme catalyses (5S)-hydroperoxy-(6E,8Z,11Z,14Z,17Z)-eicosapentaenoate + 2 glutathione = (5S)-hydroxy-(6E,8Z,11Z,14Z,17Z)-eicosapentaenoate + glutathione disulfide + H2O. The catalysed reaction is (12S)-hydroperoxy-(5Z,8Z,10E,14Z,17Z)-eicosapentaenoate + 2 glutathione = (12S)-hydroxy-(5Z,8Z,10E,14Z,17Z)-eicosapentaenoate + glutathione disulfide + H2O. It catalyses the reaction (15S)-hydroperoxy-(5Z,8Z,11Z,13E,17Z)-eicosapentaenoate + 2 glutathione = (15S)-hydroxy-(5Z,8Z,11Z,13E,17Z)-eicosapentaenoate + glutathione disulfide + H2O. It carries out the reaction (15S)-hydroperoxy-(11Z,13E)-eicosadienoate + 2 glutathione = (15S)-hydroxy-(11Z,13E)-eicosadienoate + glutathione disulfide + H2O. The enzyme catalyses (17S)-hydroperoxy-(4Z,7Z,10Z,13Z,15E,19Z)-docosahexaenoate + 2 glutathione = (17S)-hydroxy-(4Z,7Z,10Z,13Z,15E,19Z)-docosahexaenoate + glutathione disulfide + H2O. Its function is as follows. Catalyzes the reduction of hydroperoxides in a glutathione-dependent manner thus regulating cellular redox homeostasis. Can reduce small soluble hydroperoxides such as H2O2, cumene hydroperoxide and tert-butyl hydroperoxide, as well as several fatty acid-derived hydroperoxides. In platelets catalyzes the reduction of 12-hydroperoxyeicosatetraenoic acid, the primary product of the arachidonate 12-lipoxygenase pathway. The protein is Glutathione peroxidase 1 (GPX1) of Pongo pygmaeus (Bornean orangutan).